Reading from the N-terminus, the 155-residue chain is Cyanate hydratase (155 aa).

Active-site residues include arginine 95, glutamate 98, and serine 121.

Belongs to the cyanase family.

It catalyses the reaction cyanate + hydrogencarbonate + 3 H(+) = NH4(+) + 2 CO2. Its function is as follows. Catalyzes the reaction of cyanate with bicarbonate to produce ammonia and carbon dioxide. This Pseudomonas syringae pv. tomato (strain ATCC BAA-871 / DC3000) protein is Cyanate hydratase.